The sequence spans 391 residues: Septation protein etd1 (391 aa).

The disordered stretch occupies residues 49 to 68 (MKSYGSDITPRRPKQLGLPK).

In terms of biological role, involved in septation. The chain is Septation protein etd1 (etd1) from Schizosaccharomyces pombe (strain 972 / ATCC 24843) (Fission yeast).